Consider the following 372-residue polypeptide: Lysophosphatidic acid receptor 5 (372 aa).

Residues 1–30 (MFANSSANTTSTNSSVLQCPDYRDTHRLHM) are Extracellular-facing. N-linked (GlcNAc...) asparagine glycans are attached at residues N4, N8, and N13. Residues 31–51 (VVYSLVLATGLPLNALALWVF) form a helical membrane-spanning segment. Topologically, residues 52-59 (LRVLRVHS) are cytoplasmic. The helical transmembrane segment at 60 to 80 (VVSVYMCNLAASDLLFTLSLP) threads the bilayer. At 81-100 (LRLSYYAQHHWPFPGFLCQT) the chain is on the extracellular side. Residues C98 and C179 are joined by a disulfide bond. A helical transmembrane segment spans residues 101-121 (SGAIFQMNMYGSCLFLMLINV). Over 122 to 140 (DRYAAIVHPLRLRHLRRPR) the chain is Cytoplasmic. A helical membrane pass occupies residues 141–161 (VARRLCLGVWALILLFAVPAA). Residues 162–191 (RVHSPSHCTYKNITVRLCFESFSDELWKGR) lie on the Extracellular side of the membrane. N173 is a glycosylation site (N-linked (GlcNAc...) asparagine). A helical transmembrane segment spans residues 192-212 (LLPLLLLAEILGFLLPLAAVV). Over 213-243 (YSSGRVFWTLARPDATQSQRRRKTVRLLLAN) the chain is Cytoplasmic. The chain crosses the membrane as a helical span at residues 244-264 (LIIFLLCFVPYNSTLAVYGLL). The Extracellular portion of the chain corresponds to 265-280 (RANLVKNSIQDRDQVR). The helical transmembrane segment at 281 to 301 (GVLMIMVLLAGANCVLDPLVY) threads the bilayer. At 302–372 (YFSAEGFRNT…PDNCSQDSAL (71 aa)) the chain is on the cytoplasmic side.

Belongs to the G-protein coupled receptor 1 family.

It is found in the cell membrane. Receptor for lysophosphatidic acid (LPA), a mediator of diverse cellular activities. In Mus musculus (Mouse), this protein is Lysophosphatidic acid receptor 5 (Lpar5).